The chain runs to 140 residues: Photosystem I reaction center subunit XI (140 aa).

The next 3 membrane-spanning stretches (helical) occupy residues 48–68 (LEIGMAHGYFLIGPFVQLGPL), 79–99 (LLSAIGLIVILTLGMLLYGAV), and 119–139 (SGFLLGAVGGAGFAYLLLTLF).

The protein belongs to the PsaL family.

Its subcellular location is the plastid. The protein resides in the chloroplast thylakoid membrane. This chain is Photosystem I reaction center subunit XI, found in Cyanidioschyzon merolae (strain NIES-3377 / 10D) (Unicellular red alga).